The sequence spans 84 residues: MSILSFLLGEKKKSASVAKERLQLIIAHERVGGRPPADYLPALQKELVAVISKYVHISDDDIRVSLERQDDLEVLEVKIEIPQA.

Belongs to the MinE family.

Its function is as follows. Prevents the cell division inhibition by proteins MinC and MinD at internal division sites while permitting inhibition at polar sites. This ensures cell division at the proper site by restricting the formation of a division septum at the midpoint of the long axis of the cell. This Burkholderia cenocepacia (strain HI2424) protein is Cell division topological specificity factor.